We begin with the raw amino-acid sequence, 123 residues long: Small ribosomal subunit protein uS12c (123 aa).

Over residues 1–16 (MPTIQQLIRNSRQPAE) the composition is skewed to polar residues. A disordered region spans residues 1–23 (MPTIQQLIRNSRQPAENRTKSPA).

Belongs to the universal ribosomal protein uS12 family. In terms of assembly, part of the 30S ribosomal subunit.

The protein resides in the plastid. It localises to the chloroplast. Functionally, with S4 and S5 plays an important role in translational accuracy. Located at the interface of the 30S and 50S subunits. This is Small ribosomal subunit protein uS12c (rps12) from Staurastrum punctulatum (Green alga).